A 637-amino-acid chain; its full sequence is CREB-regulated transcription coactivator 3 (637 aa).

Residue Ser-66 is modified to Phosphoserine. Residues 105–115 show a composition bias toward basic residues; sequence NRLHSSHHRPI. Disordered stretches follow at residues 105–184 and 269–288; these read NRLH…SLQD and HFPS…YANI. Ser-133 is modified (phosphoserine). Phosphothreonine is present on Thr-143. Ser-145 carries the phosphoserine; by SIK2 modification. Residues 145–159 show a composition bias toward polar residues; sequence SDSALHTSASSTKSQ. Thr-151 bears the Phosphothreonine mark. Ser-293 carries the post-translational modification Phosphoserine. The segment at 299–462 is disordered; that stretch reads AMTHLGISGS…QNYQPPSPVP (164 aa). Over residues 309–337 the composition is skewed to polar residues; it reads PGMQNTRSNPSIQATMNNNSLASNVNSHT. Over residues 344–365 the composition is skewed to low complexity; it reads PALHPSLRLSSLSNPSLPTSAL. 2 positions are modified to phosphoserine: Ser-377 and Ser-396. Positions 377–395 are enriched in polar residues; it reads SPLTLTPGSESNRSISNQF. Over residues 396–407 the composition is skewed to low complexity; it reads SPTSPMNMPPNS. A compositionally biased stretch (pro residues) spans 418–429; it reads SLPPLEPPPPYP. Positions 430–447 are enriched in low complexity; that stretch reads LYSDQPQPHLHHTQQQMH. At Ser-561 the chain carries Phosphoserine. The interval 615–637 is disordered; sequence MLSDPDMVLPDPSIEDSFRSDKL.

Belongs to the TORC family. Binding, as a tetramer, through its N-terminal region, with the bZIP domain of creb1 enhances recruitment of taf4 to the promoter. 'Arg-300' in the bZIP domain of creb1 is essential for this interaction.

Its subcellular location is the nucleus. The protein localises to the cytoplasm. Its function is as follows. Transcriptional coactivator for creb1 which activates transcription through both consensus and variant cAMP response element (CRE) sites. Acts as a coactivator, in the SIK/TORC signaling pathway, being active when dephosphorylated and acts independently of creb1 'Ser-119' phosphorylation. Enhances the interaction of creb1 with taf4. Regulates the expression of specific CREB-activated genes such as the steroidogenic gene, StAR. Potent coactivator of ppargc1a and inducer of mitochondrial biogenesis in muscle cells. The sequence is that of CREB-regulated transcription coactivator 3 (crtc3) from Xenopus tropicalis (Western clawed frog).